Consider the following 968-residue polypeptide: Glycine dehydrogenase (decarboxylating) (968 aa).

Lysine 717 is modified (N6-(pyridoxal phosphate)lysine).

The protein belongs to the GcvP family. The glycine cleavage system is composed of four proteins: P, T, L and H. Pyridoxal 5'-phosphate is required as a cofactor.

It catalyses the reaction N(6)-[(R)-lipoyl]-L-lysyl-[glycine-cleavage complex H protein] + glycine + H(+) = N(6)-[(R)-S(8)-aminomethyldihydrolipoyl]-L-lysyl-[glycine-cleavage complex H protein] + CO2. The glycine cleavage system catalyzes the degradation of glycine. The P protein binds the alpha-amino group of glycine through its pyridoxal phosphate cofactor; CO(2) is released and the remaining methylamine moiety is then transferred to the lipoamide cofactor of the H protein. The polypeptide is Glycine dehydrogenase (decarboxylating) (Tropheryma whipplei (strain TW08/27) (Whipple's bacillus)).